The following is a 346-amino-acid chain: Histone PARylation factor 1 (346 aa).

At M1 the chain carries N-acetylmethionine. Positions 1–10 (MVGGGAKRRL) are enriched in basic residues. The interval 1 to 29 (MVGGGAKRRLRGEGPQCEKPVDMKKSKSC) is disordered. K19 carries the post-translational modification N6-acetyllysine. Basic and acidic residues predominate over residues 19-29 (KPVDMKKSKSC). Residue S97 is modified to ADP-ribosylserine. An N6-acetyllysine mark is found at K186 and K233. The residue at position 235 (D235) is a PolyADP-ribosyl aspartic acid. Y238 bears the ADP-ribosyltyrosine mark. E240 is modified (polyADP-ribosyl glutamic acid). Positions 242–346 (PETDASLRRI…SQDDVDQLAA (105 aa)) are interaction with PARP1. The active-site Proton donor is E284.

It belongs to the HPF1 family. In terms of assembly, interacts with PARP1 (via the PARP catalytic domain). Interacts with PARP2 (via the PARP catalytic domain). Interacts with core nucleosomes in a PARP1- and PARP2-dependent manner.

The protein resides in the chromosome. Its subcellular location is the nucleus. In terms of biological role, cofactor for serine ADP-ribosylation that confers serine specificity on PARP1 and PARP2 and plays a key role in DNA damage response. Initiates the repair of double-strand DNA breaks: recruited to DNA damage sites by PARP1 and PARP2 and switches the amino acid specificity of PARP1 and PARP2 from aspartate or glutamate to serine residues, licensing serine ADP-ribosylation of target proteins. Serine ADP-ribosylation of target proteins, such as histones, promotes decompaction of chromatin and the recruitment of repair factors leading to the reparation of DNA strand breaks. Serine ADP-ribosylation of proteins constitutes the primary form of ADP-ribosylation of proteins in response to DNA damage. HPF1 acts by completing the active site of PARP1 and PARP2: forms a composite active site composed of residues from HPF1 and PARP1 or PARP2. While HPF1 promotes the initiation of serine ADP-ribosylation, it restricts the polymerase activity of PARP1 and PARP2 in order to limit the length of poly-ADP-ribose chains. HPF1 also promotes tyrosine ADP-ribosylation, probably by conferring tyrosine specificity on PARP1. The chain is Histone PARylation factor 1 from Bos taurus (Bovine).